The chain runs to 177 residues: ATP-dependent protease subunit HslV (177 aa).

Threonine 7 is an active-site residue. Residues glycine 162, cysteine 165, and threonine 168 each coordinate Na(+).

It belongs to the peptidase T1B family. HslV subfamily. As to quaternary structure, a double ring-shaped homohexamer of HslV is capped on each side by a ring-shaped HslU homohexamer. The assembly of the HslU/HslV complex is dependent on binding of ATP.

The protein localises to the cytoplasm. The enzyme catalyses ATP-dependent cleavage of peptide bonds with broad specificity.. With respect to regulation, allosterically activated by HslU binding. In terms of biological role, protease subunit of a proteasome-like degradation complex believed to be a general protein degrading machinery. This chain is ATP-dependent protease subunit HslV, found in Persephonella marina (strain DSM 14350 / EX-H1).